The sequence spans 59 residues: Putative potassium channel toxin Ts25 (59 aa).

An N-terminal signal peptide occupies residues Met-1–Gln-22. Intrachain disulfides connect Cys-29/Cys-50, Cys-35/Cys-55, and Cys-39/Cys-57.

It belongs to the short scorpion toxin superfamily. Potassium channel inhibitor family. Alpha-KTx 04 subfamily. Expressed by the venom gland.

It localises to the secreted. In terms of biological role, potently blocks Kv1.1/KCNA1 (85%), Kv1.2/KCNA2 (91%), Kv1.3/KCNA3 (89%), Kv1.6/KCNA6 (94%), and Shaker (97%). The sequence is that of Putative potassium channel toxin Ts25 from Tityus serrulatus (Brazilian scorpion).